The following is an 83-amino-acid chain: Bowman-Birk type seed trypsin and chymotrypsin inhibitor (83 aa).

Disulfide bonds link Cys18–Cys72, Cys19–Cys34, Cys22–Cys68, Cys24–Cys32, Cys42–Cys49, Cys46–Cys61, and Cys51–Cys59.

Belongs to the Bowman-Birk serine protease inhibitor family.

This is Bowman-Birk type seed trypsin and chymotrypsin inhibitor from Vigna unguiculata (Cowpea).